A 679-amino-acid polypeptide reads, in one-letter code: UvrABC system protein B (679 aa).

One can recognise a Helicase ATP-binding domain in the interval 25-412 (QGVNSGEEFQ…EGKFIEQVIR (388 aa)). 38-45 (GATGTGKT) lines the ATP pocket. Positions 91–114 (YYDYYQPEAYVPVSDTYIAKTASI) match the Beta-hairpin motif. One can recognise a Helicase C-terminal domain in the interval 429–583 (QIDDLLSEIR…KKYNQINGIT (155 aa)). Residues 639-674 (PSLIDKLENKMKDAAKELNFEEAANLRDRIKKLRQK) enclose the UVR domain.

Belongs to the UvrB family. In terms of assembly, forms a heterotetramer with UvrA during the search for lesions. Interacts with UvrC in an incision complex.

It is found in the cytoplasm. The UvrABC repair system catalyzes the recognition and processing of DNA lesions. A damage recognition complex composed of 2 UvrA and 2 UvrB subunits scans DNA for abnormalities. Upon binding of the UvrA(2)B(2) complex to a putative damaged site, the DNA wraps around one UvrB monomer. DNA wrap is dependent on ATP binding by UvrB and probably causes local melting of the DNA helix, facilitating insertion of UvrB beta-hairpin between the DNA strands. Then UvrB probes one DNA strand for the presence of a lesion. If a lesion is found the UvrA subunits dissociate and the UvrB-DNA preincision complex is formed. This complex is subsequently bound by UvrC and the second UvrB is released. If no lesion is found, the DNA wraps around the other UvrB subunit that will check the other stand for damage. This chain is UvrABC system protein B, found in Prochlorococcus marinus subsp. pastoris (strain CCMP1986 / NIES-2087 / MED4).